The following is a 497-amino-acid chain: WASH complex subunit homolog 1 (497 aa).

The tract at residues 306 to 497 (EASEPTEAEA…PPNFDDEEWD (192 aa)) is disordered. The segment covering 323–339 (LPPPPPPMKLDPSPQPA) has biased composition (pro residues). Low complexity predominate over residues 341–350 (TPVEITEIPP). Residues 351–372 (IISPPAPPPPPPPPPPPPPPQT) are compositionally biased toward pro residues. The WH2 domain maps to 390–412 (GRSDLMAAIRAAGGAGNAKLSRI).

Belongs to the WASH1 family. In terms of assembly, component of the WASH core complex. Component of the DHIC (ddl-1-containing hsf-1 inhibitory) complex, which contains at least ddl-1, ddl-2, hsb-1 and hsf-1. Within the complex, interacts with ddl-1. Formation of the DHIC may be dependent upon the Insulin/IGF-1-like signaling (IIS) mediated pathway. As to expression, expressed in several neurons located throughout the body.

Its function is as follows. Acts as a component of the WASH core complex that functions as a nucleation-promoting factor (NPF) at the surface of endosomes, where it recruits and activates the Arp2/3 complex to induce actin polymerization, playing a key role in the fission of tubules that serve as transport intermediates during endosome sorting. Acts as a component of the DHIC (ddl-1-containing hsf-1 inhibitory complex) which modulates lifespan by sequestering the heat shock transcription factor hsf-1 to negatively regulate its binding to DNA and its transcriptional activity. In Caenorhabditis elegans, this protein is WASH complex subunit homolog 1.